A 309-amino-acid polypeptide reads, in one-letter code: Protease HtpX homolog (309 aa).

2 consecutive transmembrane segments (helical) span residues 7–27 (TTVL…MLGG) and 29–49 (QGMM…YWYS). His-131 serves as a coordination point for Zn(2+). Glu-132 is an active-site residue. His-135 serves as a coordination point for Zn(2+). Transmembrane regions (helical) follow at residues 141–161 (ILIG…ASMA) and 182–202 (IGLI…QMAI). Glu-207 lines the Zn(2+) pocket. Residues 278–309 (RHGSDSGTGNRDSSIRRRNMNTEAKAAWDRLR) are disordered.

It belongs to the peptidase M48B family. It depends on Zn(2+) as a cofactor.

The protein resides in the cell inner membrane. This Desulforapulum autotrophicum (strain ATCC 43914 / DSM 3382 / VKM B-1955 / HRM2) (Desulfobacterium autotrophicum) protein is Protease HtpX homolog.